The chain runs to 1994 residues: Protein-methionine sulfoxide oxidase mical3a (1994 aa).

Residues 2–498 (GDGGVNAVGE…RHLLDTGETR (497 aa)) form a monooxygenase domain region. Residues Cys101, 101 to 129 (CGLR…SRNN), Glu120, Arg122, Arg127, Asn129, and Asp402 each bind FAD. A Calponin-homology (CH) domain is found at 521–627 (IVRSSKLLNW…YLSQFYEMFK (107 aa)). The segment at 666–708 (ISRKRNPKDKKEKELDGLGKRRKTSQAGQSEDEELQRANRDDR) is disordered. The span at 674-684 (DKKEKELDGLG) shows a compositional bias: basic and acidic residues. The LIM zinc-binding domain maps to 772-834 (DVCFFCRKRV…KPHYCYRLSG (63 aa)). Disordered stretches follow at residues 843–900 (PAAA…LKGT), 917–1064 (EELE…AEAR), 1176–1263 (SQPV…ELKK), 1281–1476 (LGLT…REEV), 1493–1555 (VEDT…SPEA), and 1598–1747 (KVAW…LRLR). Acidic residues-rich tracts occupy residues 917-926 (EELEEVPEET) and 951-961 (SDMEEEDEDAE). The segment covering 975 to 987 (EAVELHAKLKGES) has biased composition (basic and acidic residues). Acidic residues-rich tracts occupy residues 1001-1037 (GEMD…DPEA) and 1046-1060 (PGTE…SDAE). The span at 1200–1215 (PTGNPLSPICTQSQPC) shows a compositional bias: polar residues. 2 stretches are compositionally biased toward basic and acidic residues: residues 1249 to 1263 (RTNE…ELKK) and 1287 to 1297 (ERSKTAVEKSI). Composition is skewed to low complexity over residues 1299 to 1314 (KTPT…YTPE) and 1358 to 1368 (SSSSGLGLNGS). Residues 1369–1389 (VTTSQTAASDSYNNSDSTMLT) are compositionally biased toward polar residues. Residues 1437-1458 (PVSPPQPKQKPVTAPVPTPRTN) are compositionally biased toward pro residues. Residues 1464-1476 (RVKEPNKPRREEV) are compositionally biased toward basic and acidic residues. Over residues 1616 to 1635 (AQKDSAVKALESKKQADTLP) the composition is skewed to basic and acidic residues. Positions 1649-1660 (SSVTSSESSTGG) are enriched in low complexity. Positions 1661 to 1679 (KSKKRSSLFSPRKNKKEKK) are enriched in basic residues. The span at 1680-1693 (AKNERLSSTEETPP) shows a compositional bias: basic and acidic residues. Low complexity predominate over residues 1718 to 1729 (CPSTPSSSTTGD). Basic and acidic residues predominate over residues 1730-1746 (SGKKKDSPLDRSSDLRL). Coiled-coil stretches lie at residues 1796 to 1855 (EEEL…KALR) and 1894 to 1960 (QEKN…EQRD). Residues 1816–1982 (KQEELKRLHR…EKEEDKDLEA (167 aa)) form the bMERB domain.

The protein belongs to the Mical family. It depends on FAD as a cofactor.

Its subcellular location is the cytoplasm. The protein resides in the cytoskeleton. It is found in the nucleus. It carries out the reaction L-methionyl-[F-actin] + NADPH + O2 + H(+) = L-methionyl-(R)-S-oxide-[F-actin] + NADP(+) + H2O. In terms of biological role, monooxygenase that promotes depolymerization of F-actin by mediating oxidation of specific methionine residues on actin. Acts by modifying actin subunits through the addition of oxygen to form methionine-sulfoxide, leading to promote actin filament severing and prevent repolymerization. Involved in exocytic vesicles tethering and fusion: the monooxygenase activity is required for this process. This chain is Protein-methionine sulfoxide oxidase mical3a (mical3a), found in Danio rerio (Zebrafish).